A 426-amino-acid polypeptide reads, in one-letter code: Glutamate-1-semialdehyde 2,1-aminomutase (426 aa).

Lys265 bears the N6-(pyridoxal phosphate)lysine mark.

Belongs to the class-III pyridoxal-phosphate-dependent aminotransferase family. HemL subfamily. Homodimer. The cofactor is pyridoxal 5'-phosphate.

It is found in the cytoplasm. It catalyses the reaction (S)-4-amino-5-oxopentanoate = 5-aminolevulinate. It functions in the pathway porphyrin-containing compound metabolism; protoporphyrin-IX biosynthesis; 5-aminolevulinate from L-glutamyl-tRNA(Glu): step 2/2. The chain is Glutamate-1-semialdehyde 2,1-aminomutase from Cellvibrio japonicus (strain Ueda107) (Pseudomonas fluorescens subsp. cellulosa).